Here is a 560-residue protein sequence, read N- to C-terminus: Glutamate--tRNA ligase (560 aa).

The short motif at 108 to 118 (PNPSGPLHLGH) is the 'HIGH' region element.

This sequence belongs to the class-I aminoacyl-tRNA synthetase family. Glutamate--tRNA ligase type 2 subfamily.

Its subcellular location is the cytoplasm. The catalysed reaction is tRNA(Glu) + L-glutamate + ATP = L-glutamyl-tRNA(Glu) + AMP + diphosphate. Functionally, catalyzes the attachment of glutamate to tRNA(Glu) in a two-step reaction: glutamate is first activated by ATP to form Glu-AMP and then transferred to the acceptor end of tRNA(Glu). In Methanocorpusculum labreanum (strain ATCC 43576 / DSM 4855 / Z), this protein is Glutamate--tRNA ligase.